We begin with the raw amino-acid sequence, 112 residues long: Cell cycle protein GpsB (112 aa).

Residues 42–77 (YQKMADMNNEVVKLSEENNKLKKEVEELRLRVATSR) are a coiled coil. The disordered stretch occupies residues 75–97 (TSRPSDNKSFSSNNSSSSNNNVD). Low complexity predominate over residues 81–95 (NKSFSSNNSSSSNNN).

The protein belongs to the GpsB family. Forms polymers through the coiled coil domains. Interacts with PBP1, MreC and EzrA.

Its subcellular location is the cytoplasm. In terms of biological role, divisome component that associates with the complex late in its assembly, after the Z-ring is formed, and is dependent on DivIC and PBP2B for its recruitment to the divisome. Together with EzrA, is a key component of the system that regulates PBP1 localization during cell cycle progression. Its main role could be the removal of PBP1 from the cell pole after pole maturation is completed. Also contributes to the recruitment of PBP1 to the division complex. Not essential for septum formation. The protein is Cell cycle protein GpsB of Staphylococcus haemolyticus (strain JCSC1435).